The chain runs to 800 residues: Nucleolar complex protein 3 homolog (800 aa).

2 disordered regions span residues Lys-27 to Asp-93 and Gly-160 to Glu-187. Positions Lys-40–Gln-51 are enriched in basic residues. Residues Asn-66–Arg-78 show a composition bias toward basic and acidic residues. Residues Glu-79 to Asp-93 show a composition bias toward acidic residues. Residues Gly-160–Asn-174 are compositionally biased toward basic and acidic residues. Positions Lys-175–Glu-187 are enriched in acidic residues. Lys-333 is covalently cross-linked (Glycyl lysine isopeptide (Lys-Gly) (interchain with G-Cter in SUMO2)). Positions Lys-451–Leu-490 form a coiled coil. Position 787 is a phosphoserine (Ser-787).

Belongs to the CBF/MAK21 family. Expressed in colon, heart, kidney, liver, lung, placenta, skeletal muscle, small intestine, spleen and thymus.

The protein resides in the nucleus. It localises to the nucleolus. The protein localises to the nucleus speckle. Its function is as follows. May be required for adipogenesis. This chain is Nucleolar complex protein 3 homolog (NOC3L), found in Homo sapiens (Human).